A 268-amino-acid polypeptide reads, in one-letter code: 3-deoxy-manno-octulosonate cytidylyltransferase (268 aa).

This sequence belongs to the KdsB family.

The protein resides in the cytoplasm. The enzyme catalyses 3-deoxy-alpha-D-manno-oct-2-ulosonate + CTP = CMP-3-deoxy-beta-D-manno-octulosonate + diphosphate. It participates in nucleotide-sugar biosynthesis; CMP-3-deoxy-D-manno-octulosonate biosynthesis; CMP-3-deoxy-D-manno-octulosonate from 3-deoxy-D-manno-octulosonate and CTP: step 1/1. Its pathway is bacterial outer membrane biogenesis; lipopolysaccharide biosynthesis. Its function is as follows. Activates KDO (a required 8-carbon sugar) for incorporation into bacterial lipopolysaccharide in Gram-negative bacteria. In Ralstonia nicotianae (strain ATCC BAA-1114 / GMI1000) (Ralstonia solanacearum), this protein is 3-deoxy-manno-octulosonate cytidylyltransferase.